Reading from the N-terminus, the 458-residue chain is tRNA modification GTPase MnmE (458 aa).

(6S)-5-formyl-5,6,7,8-tetrahydrofolate contacts are provided by Arg-26, Glu-88, and Arg-127. Residues 224 to 378 (GLSTAIIGRP…IEDRINQLFF (155 aa)) form the TrmE-type G domain. Asn-234 is a K(+) binding site. GTP-binding positions include 234–239 (NVGKSS), 253–259 (TDIAGTT), and 278–281 (DTAG). Ser-238 contributes to the Mg(2+) binding site. 3 residues coordinate K(+): Thr-253, Ile-255, and Thr-258. Thr-259 is a binding site for Mg(2+). Residue Lys-458 participates in (6S)-5-formyl-5,6,7,8-tetrahydrofolate binding.

Belongs to the TRAFAC class TrmE-Era-EngA-EngB-Septin-like GTPase superfamily. TrmE GTPase family. In terms of assembly, homodimer. Heterotetramer of two MnmE and two MnmG subunits. K(+) serves as cofactor.

It is found in the cytoplasm. In terms of biological role, exhibits a very high intrinsic GTPase hydrolysis rate. Involved in the addition of a carboxymethylaminomethyl (cmnm) group at the wobble position (U34) of certain tRNAs, forming tRNA-cmnm(5)s(2)U34. This is tRNA modification GTPase MnmE from Streptococcus pyogenes serotype M3 (strain ATCC BAA-595 / MGAS315).